Consider the following 449-residue polypeptide: Protein tweety homolog 1 (449 aa).

Topologically, residues 1–43 are extracellular; it reads MSSSHGYRASWWTYILHQVPHTNFQFEVVDNQFAPQEWPYQQA. Residues 44-64 form a helical membrane-spanning segment; the sequence is LLFLASIAGLCLAISLILICV. The Cytoplasmic segment spans residues 65–86; sequence YLIRFCCCSSQEDDDSKSHRVC. Residues 87–107 form a helical membrane-spanning segment; that stretch reads CVTWSCVAAVIICCAGIGIGF. Residues 108–212 are Extracellular-facing; it reads YGNSETNDGV…QVNFIEDYRW (105 aa). N-linked (GlcNAc...) asparagine glycosylation occurs at Asn-128. The helical transmembrane segment at 213–233 threads the bilayer; it reads LAYILLLLLDLIICLFTLLGL. Residues 234–238 are Cytoplasmic-facing; it reads AKQIK. A helical membrane pass occupies residues 239–259; it reads WLVIVMTVVSFFVLLLSWGSM. Residues 260–388 lie on the Extracellular side of the membrane; that stretch reads GLEMATAVGL…LKGLCYDGME (129 aa). Disulfide bonds link Cys-273-Cys-383 and Cys-301-Cys-368. Asn-282 and Asn-353 each carry an N-linked (GlcNAc...) asparagine glycan. Residues 389–409 traverse the membrane as a helical segment; sequence GILFLLLFSFLSALSFTAAIC. At 410-449 the chain is on the cytoplasmic side; the sequence is SLPRAWKRFQNRDLDYDDMDEDDPFNPQESKRFVQWQSSI.

This sequence belongs to the tweety family. As to quaternary structure, homotetramer; disulfide-linked. Homodimer.

The protein resides in the cell membrane. The enzyme catalyses chloride(in) = chloride(out). It carries out the reaction L-glutamate(out) = L-glutamate(in). May act as a calcium-independent, swelling-dependent volume-regulated anion channel (VRAC-swell) which plays a pivotal role in the process of regulatory volume decrease (RVD) in the brain through the efflux of anions like chloride and organic osmolytes like glutamate. This chain is Protein tweety homolog 1 (ttyh1), found in Xenopus tropicalis (Western clawed frog).